A 423-amino-acid chain; its full sequence is MIDLKALRENPDVGRASQRSRGEDPELVDRLLDADARHRALLTSFEQQRAEQKELSRAVGKAAPQDRPAVLAHAKSRAEQVKSAEADADRARAELDALLSRMPNIVADGVPPGGEDDYVVLRHEGTPRDFAAEGFTPRDHLELGERLRAIDTERGAKVSGARFFYLTGLGARLELALLNAAIDKALTAGFTPVITPTLVKPEIMAGTGFLGAHAEEVYRIEKDDLYLVGTSEVALAGYHANEIVDLSDGPLRYAGWSACYRREAGSHGKDTRGIIRVHQFHKVEMFSYARLEDAAVEHERLLAWEEELLRLVELPYRVIDTAAGDLGSSAARKFDCEAWLPTQERYLELTSTSNCTSFQARRLGTRERLEDGSTRPVATLNGTLATTRWIVTILENHQNPDGSVRVPAGLQPYLGGLTELRAS.

Over residues 1-12 (MIDLKALRENPD) the composition is skewed to basic and acidic residues. The disordered stretch occupies residues 1–26 (MIDLKALRENPDVGRASQRSRGEDPE). L-serine is bound at residue 230-232 (TSE). ATP contacts are provided by residues 261–263 (RRE) and V277. E284 is an L-serine binding site. Position 348–351 (348–351 (ELTS)) interacts with ATP. T383 contacts L-serine.

It belongs to the class-II aminoacyl-tRNA synthetase family. Type-1 seryl-tRNA synthetase subfamily. In terms of assembly, homodimer. The tRNA molecule binds across the dimer.

The protein localises to the cytoplasm. The enzyme catalyses tRNA(Ser) + L-serine + ATP = L-seryl-tRNA(Ser) + AMP + diphosphate + H(+). The catalysed reaction is tRNA(Sec) + L-serine + ATP = L-seryl-tRNA(Sec) + AMP + diphosphate + H(+). It functions in the pathway aminoacyl-tRNA biosynthesis; selenocysteinyl-tRNA(Sec) biosynthesis; L-seryl-tRNA(Sec) from L-serine and tRNA(Sec): step 1/1. Functionally, catalyzes the attachment of serine to tRNA(Ser). Is also able to aminoacylate tRNA(Sec) with serine, to form the misacylated tRNA L-seryl-tRNA(Sec), which will be further converted into selenocysteinyl-tRNA(Sec). The sequence is that of Serine--tRNA ligase from Beutenbergia cavernae (strain ATCC BAA-8 / DSM 12333 / CCUG 43141 / JCM 11478 / NBRC 16432 / NCIMB 13614 / HKI 0122).